We begin with the raw amino-acid sequence, 322 residues long: MTNADEQNMGQQEGTDTATTAQDTNTQTVGTQSENTQNTQQASDAQTEQTPAELRDVLPQLTGEVDEDDVLDAQEEQAAGQSARKVDEDGEEYEEEFIDADDLMGLLGEMKEMLEAQSKEIRGLRREMRELRESQGGGFRGGDRGGDRGGFRPREDRGGFGGDRDRGGFRPREDRGERSFGGDRGGDRGGFRPREDRGGFGGDRDRGGFRPREDRGERSFGGDRGGDRGGQGGFRPREDRGGFGDRDRGGFRPREDRGERNFGGDRGGDRGGQGGFRPREDRNFGDREFRPRTDDAQGNQEGGFRPRARADRGWANRRTDEE.

Residues 1-13 show a composition bias toward polar residues; that stretch reads MTNADEQNMGQQE. Disordered stretches follow at residues 1–94 and 125–322; these read MTNA…EEYE and RREM…TDEE. Residues 14–31 show a composition bias toward low complexity; that stretch reads GTDTATTAQDTNTQTVGT. Residues 32–50 are compositionally biased toward polar residues; sequence QSENTQNTQQASDAQTEQT. The segment covering 64–75 has biased composition (acidic residues); that stretch reads EVDEDDVLDAQE. 4 stretches are compositionally biased toward basic and acidic residues: residues 141 to 227, 235 to 269, 277 to 295, and 308 to 322; these read GGDR…RGGD, RPREDRGGFGDRDRGGFRPREDRGERNFGGDRGGD, RPREDRNFGDREFRPRTDD, and ARADRGWANRRTDEE.

This is an uncharacterized protein from Deinococcus radiodurans (strain ATCC 13939 / DSM 20539 / JCM 16871 / CCUG 27074 / LMG 4051 / NBRC 15346 / NCIMB 9279 / VKM B-1422 / R1).